Here is a 967-residue protein sequence, read N- to C-terminus: Glutamate receptor 2.6 (967 aa).

Positions 1 to 31 (MSLFNHLLSRALPLWLLFFINFLVLLGKSQQ) are cleaved as a signal peptide. At 32-590 (EVLQVQVGIV…WVFLKPLTRE (559 aa)) the chain is on the extracellular side. Residues Asn45, Asn57, Asn121, Asn336, Asn345, Asn424, and Asn550 are each glycosylated (N-linked (GlcNAc...) asparagine). A helical membrane pass occupies residues 591 to 611 (LWFLTAASFLYIGIMVWIFEY). At 612–621 (QASGDFRKQS) the chain is on the cytoplasmic side. Residues 622 to 642 (IINKISNVFYFSFSTLFFAHM) form a helical membrane-spanning segment. Residues 643 to 651 (RPSESIFTR) are Cytoplasmic-facing. A helical membrane pass occupies residues 652–672 (VLVVVWCFVLLILTQSYTATL). The Extracellular portion of the chain corresponds to 673-832 (TSMLTVQELR…DSPIRLDHHS (160 aa)). Asn795 is a glycosylation site (N-linked (GlcNAc...) asparagine). A helical membrane pass occupies residues 833 to 853 (FEALFTIVFVVSMLLLLAMLV). Topologically, residues 854 to 967 (CRRYRQESKS…AALFSRIKSA (114 aa)) are cytoplasmic. Over residues 864-874 (GEINANNSPTD) the composition is skewed to polar residues. The interval 864 to 913 (GEINANNSPTDGNMRAPPNQPTDDNMRAPTSPPIDDQVLEPPGPALNEAD) is disordered.

It belongs to the glutamate-gated ion channel (TC 1.A.10.1) family. May form heteromers. Expressed predominantly in roots.

It localises to the membrane. Its function is as follows. Glutamate-gated receptor that probably acts as a non-selective cation channel. May be involved in light-signal transduction and calcium homeostasis via the regulation of calcium influx into cells. This is Glutamate receptor 2.6 (GLR2.6) from Arabidopsis thaliana (Mouse-ear cress).